Consider the following 478-residue polypeptide: Ribulose bisphosphate carboxylase large chain (478 aa).

Residues 1–2 (MS) constitute a propeptide that is removed on maturation. Pro-3 bears the N-acetylproline mark. At Lys-14 the chain carries N6,N6,N6-trimethyllysine. Positions 123 and 173 each coordinate substrate. The active-site Proton acceptor is the Lys-175. Lys-177 provides a ligand contact to substrate. Mg(2+) contacts are provided by Lys-201, Asp-203, and Glu-204. Lys-201 carries the post-translational modification N6-carboxylysine. The active-site Proton acceptor is the His-294. Residues Arg-295, His-327, and Ser-379 each coordinate substrate.

It belongs to the RuBisCO large chain family. Type I subfamily. In terms of assembly, heterohexadecamer of 8 large chains and 8 small chains; disulfide-linked. The disulfide link is formed within the large subunit homodimers. It depends on Mg(2+) as a cofactor. Post-translationally, the disulfide bond which can form in the large chain dimeric partners within the hexadecamer appears to be associated with oxidative stress and protein turnover.

Its subcellular location is the plastid. The protein resides in the chloroplast. It carries out the reaction 2 (2R)-3-phosphoglycerate + 2 H(+) = D-ribulose 1,5-bisphosphate + CO2 + H2O. The catalysed reaction is D-ribulose 1,5-bisphosphate + O2 = 2-phosphoglycolate + (2R)-3-phosphoglycerate + 2 H(+). Its function is as follows. RuBisCO catalyzes two reactions: the carboxylation of D-ribulose 1,5-bisphosphate, the primary event in carbon dioxide fixation, as well as the oxidative fragmentation of the pentose substrate in the photorespiration process. Both reactions occur simultaneously and in competition at the same active site. The protein is Ribulose bisphosphate carboxylase large chain of Neurachne munroi.